A 70-amino-acid polypeptide reads, in one-letter code: Large ribosomal subunit protein eL38 (70 aa).

The protein belongs to the eukaryotic ribosomal protein eL38 family.

The sequence is that of Large ribosomal subunit protein eL38 (RpL38) from Timarcha balearica.